A 440-amino-acid polypeptide reads, in one-letter code: Tol-Pal system protein TolB (440 aa).

A signal peptide spans methionine 1–alanine 21.

The protein belongs to the TolB family. The Tol-Pal system is composed of five core proteins: the inner membrane proteins TolA, TolQ and TolR, the periplasmic protein TolB and the outer membrane protein Pal. They form a network linking the inner and outer membranes and the peptidoglycan layer.

It is found in the periplasm. Part of the Tol-Pal system, which plays a role in outer membrane invagination during cell division and is important for maintaining outer membrane integrity. In Shewanella halifaxensis (strain HAW-EB4), this protein is Tol-Pal system protein TolB.